Consider the following 822-residue polypeptide: LPS-assembly protein LptD (822 aa).

An N-terminal signal peptide occupies residues 1 to 37 (MRRASRSPFILSPVAHAVSRLVLCATLGWTYAGSGHA). The interval 38–97 (QVPAPAGGSEVPLGARPPASAPVAAQQETPLKLKSSPALAEEVPNGPGDEGPTFVFGDSV) is disordered.

The protein belongs to the LptD family. As to quaternary structure, component of the lipopolysaccharide transport and assembly complex. Interacts with LptE and LptA.

The protein resides in the cell outer membrane. In terms of biological role, together with LptE, is involved in the assembly of lipopolysaccharide (LPS) at the surface of the outer membrane. The protein is LPS-assembly protein LptD of Polaromonas sp. (strain JS666 / ATCC BAA-500).